The following is a 462-amino-acid chain: GTPase Der (462 aa).

EngA-type G domains are found at residues 2–164 (KKIA…PKKE) and 195–366 (INVA…KNYS). Residues 8-15 (GKPNVGKS), 55-59 (DTGGI), 116-119 (NKID), 201-208 (GRVNVGKS), 248-252 (DTAGI), and 312-315 (NKWD) contribute to the GTP site. The KH-like domain occupies 367–451 (TWLPTGQLNR…PIILRPRKRG (85 aa)).

Belongs to the TRAFAC class TrmE-Era-EngA-EngB-Septin-like GTPase superfamily. EngA (Der) GTPase family. In terms of assembly, associates with the 50S ribosomal subunit.

In terms of biological role, GTPase that plays an essential role in the late steps of ribosome biogenesis. The polypeptide is GTPase Der (Nitratiruptor sp. (strain SB155-2)).